Reading from the N-terminus, the 314-residue chain is Olfactory receptor 1E5 (314 aa).

Residues 1–25 (MMGQNQTSISDFLLLGLPIQPEQQN) lie on the Extracellular side of the membrane. Asn-5 carries N-linked (GlcNAc...) asparagine glycosylation. The chain crosses the membrane as a helical span at residues 26–49 (LCYALFLAMYLTTLLGNLLIIVLI). The Cytoplasmic portion of the chain corresponds to 50-57 (RLDSHLHT). A helical transmembrane segment spans residues 58 to 79 (PMYLFLSNLSFSDLCFSSVTIP). The Extracellular portion of the chain corresponds to 80 to 100 (KLLQNMQNQDPSIPYADCLTQ). A disulfide bridge links Cys-97 with Cys-189. Residues 101-120 (MYFFLLFGDLESFLLVAMAY) traverse the membrane as a helical segment. Residues 121–139 (DRYVAICFPLHYTAIMSPM) lie on the Cytoplasmic side of the membrane. The helical transmembrane segment at 140-158 (LCLSLVALSWVLTTFHAML) threads the bilayer. Over 159 to 196 (HTLLMARLCFCADNVIPHFFCDMSALLKLACSDTRVNE) the chain is Extracellular. The chain crosses the membrane as a helical span at residues 197–219 (WVIFIMGGLIVVIPFLLILGSYA). Residues 220–236 (RIVSSILKVPSSKGICK) lie on the Cytoplasmic side of the membrane. A helical transmembrane segment spans residues 237–260 (AFSTCGSHLSVVSLFYGTIIGLYL). Residues 261–272 (CPSANSSTLKET) are Extracellular-facing. An N-linked (GlcNAc...) asparagine glycan is attached at Asn-265. Residues 273-292 (VMAMMYTVVTPMLNPFIYSL) form a helical membrane-spanning segment. Residues 293-314 (RNRDMKGALERVIXKRKNPFLL) are Cytoplasmic-facing.

Belongs to the G-protein coupled receptor 1 family.

It is found in the cell membrane. In terms of biological role, odorant receptor. This is Olfactory receptor 1E5 (OR1E5) from Pan troglodytes (Chimpanzee).